Consider the following 405-residue polypeptide: Putative polysaccharide ligase RP358 (405 aa).

10 helical membrane-spanning segments follow: residues 23–43 (IAAT…ISFI), 77–97 (LFTA…NSLV), 120–140 (VLYI…LFFI), 156–178 (FGLY…AIII), 201–221 (ISDS…FILA), 227–247 (IFFK…PVIA), 270–290 (LFIW…GYGF), 322–342 (ILQI…CLVY), 353–375 (VSNF…MISY), and 377–397 (IWQT…KLLV).

It belongs to the O-antigen ligase family.

It localises to the membrane. The sequence is that of Putative polysaccharide ligase RP358 from Rickettsia prowazekii (strain Madrid E).